A 34-amino-acid polypeptide reads, in one-letter code: Stromal 70 kDa heat shock-related protein, chloroplastic (34 aa).

It belongs to the heat shock protein 70 family.

Its subcellular location is the plastid. The protein resides in the chloroplast stroma. Functionally, interacts with newly imported chloroplast proteins to assist in their maturation. The chain is Stromal 70 kDa heat shock-related protein, chloroplastic from Cucurbita maxima (Pumpkin).